Reading from the N-terminus, the 174-residue chain is Small t antigen (174 aa).

Residue Met1 is modified to N-acetylmethionine; by host. The J domain maps to 12-75 (QLMDLLGLER…VKYAHQPDFG (64 aa)). A C4-type; atypical zinc finger spans residues 103 to 116 (CAKKMSANCICLLC). The H1C3-type; atypical zinc-finger motif lies at 122 to 143 (HENRKLYRKDPLVWVDCYCFDC).

In terms of assembly, interacts with host PPP2R1A; the interaction inhibits PP2A activity.

The protein resides in the host cytoplasm. It localises to the host nucleus. In terms of biological role, promotes efficient viral genome replication by accelerating both G1 and S phase progression of the cell cycle. Inhibits host PP2A by binding to the A subunit, thereby displacing lower affinity regulatory B subunit. Inactivation of PP2A in turn results in the transactivation of cyclin A and cyclin D1 promoters. Late during the infection cycle, ST may induce dephosphorylation of host eIF4E-binding protein EIF4EBP1 leading to the inhibition of cap-dependent translation. May establish and maintain high levels of viral genomes during persistent infection in cell culture. The sequence is that of Small t antigen from Simian virus 40 (SV40).